A 529-amino-acid chain; its full sequence is Potassium voltage-gated channel subfamily A member 6 (529 aa).

The interval 1 to 35 is disordered; that stretch reads MRSEKSLTLAAPGEVRGPEGEQQDAGEFQEAEGGG. The Cytoplasmic portion of the chain corresponds to 1–171; the sequence is MRSEKSLTLA…LLFEYPESSG (171 aa). Ser-3 is subject to Phosphoserine. Acidic residues predominate over residues 21–30; that stretch reads EQQDAGEFQE. The helical transmembrane segment at 172 to 193 threads the bilayer; sequence PARGIAIVSVLVILISIVIFCL. At 194–262 the chain is on the extracellular side; the sequence is ETLPQFRADG…TLGGSFFTDP (69 aa). Positions 203–238 are disordered; sequence GRGGSNEGSGTRLSPASRSHEEEDEDEDSYAFPGSI. The segment covering 210-219 has biased composition (polar residues); sequence GSGTRLSPAS. The helical transmembrane segment at 263–284 threads the bilayer; it reads FFLVETLCIVWFTFELLVRFSA. A lipid anchor (S-palmitoyl cysteine) is attached at Cys-285. The Cytoplasmic segment spans residues 285-295; sequence CPSKAAFFRNI. A helical transmembrane segment spans residues 296–316; the sequence is MNIIDLVAIFPYFITLGTELV. At 317-337 the chain is on the extracellular side; that stretch reads QRHEQQSVSGGSGQNGQQAMS. A helical; Voltage-sensor transmembrane segment spans residues 338–358; that stretch reads LAILRVIRLVRVFRIFKLSRH. At 359–373 the chain is on the cytoplasmic side; that stretch reads SKGLQILGKTLQASM. The tract at residues 360–373 is S4-S5 linker; it reads KGLQILGKTLQASM. A helical membrane pass occupies residues 374-395; that stretch reads RELGLLIFFLFIGVILFSSAVY. The Extracellular segment spans residues 396–409; sequence FAEADDVDSLFPSI. An intramembrane region (helical) is located at residues 410–421; it reads PDAFWWAVVTMT. The Selectivity filter motif lies at 422–427; that stretch reads TVGYGD. An intramembrane segment occupies 422–429; that stretch reads TVGYGDMY. The Extracellular segment spans residues 430–436; that stretch reads PMTVGGK. The chain crosses the membrane as a helical span at residues 437-465; that stretch reads IVGSLCAIAGVLTIALPVPVIVSNFNYFY. Over 466-529 the chain is Cytoplasmic; sequence HRETEQEEQG…YAEKRMLTEV (64 aa). Residues 488–513 are disordered; it reads DLKATDNGLGKPDFAEASRERRPSYL. Over residues 500–510 the composition is skewed to basic and acidic residues; it reads DFAEASRERRP. Residue Ser-511 is modified to Phosphoserine; by PKA. The PDZ-binding signature appears at 527–529; it reads TEV.

Belongs to the potassium channel family. A (Shaker) (TC 1.A.1.2) subfamily. Kv1.6/KCNA6 sub-subfamily. In terms of assembly, homotetramer and heterotetramer of potassium channel proteins. Interacts with KCNAB1 and KCNAB2.

It is found in the cell membrane. The catalysed reaction is K(+)(in) = K(+)(out). Functionally, voltage-gated potassium channel that mediates transmembrane potassium transport in excitable membranes. Forms tetrameric potassium-selective channels through which potassium ions pass in accordance with their electrochemical gradient. The channel alternates between opened and closed conformations in response to the voltage difference across the membrane. Can form functional homotetrameric channels and heterotetrameric channels that contain variable proportions of KCNA1, KCNA2, KCNA4, KCNA6, and possibly other family members as well; channel properties depend on the type of alpha subunits that are part of the channel. Channel properties are modulated by cytoplasmic beta subunits that regulate the subcellular location of the alpha subunits and promote rapid inactivation. Homotetrameric channels display rapid activation and slow inactivation. This is Potassium voltage-gated channel subfamily A member 6 (Kcna6) from Mus musculus (Mouse).